The sequence spans 429 residues: Fc receptor-like protein 1 (429 aa).

A signal peptide spans 1-16 (MLPRLLLLICAPLCEP). Ig-like C2-type domains lie at 17–104 (AELF…SQIN), 109–200 (PVAD…VSIT), and 208–291 (PILM…EAVT). The Extracellular segment spans residues 17–307 (AELFLIASPS…TGARSNHLTS (291 aa)). Disulfide bonds link C38/C86, C134/C183, and C229/C276. N-linked (GlcNAc...) asparagine glycosylation is present at N293. The chain crosses the membrane as a helical span at residues 308 to 328 (GVIEGLLSTLGPATVALLFCY). Residues 329–429 (GLKRKIGRRS…ITDVDYEDAM (101 aa)) lie on the Cytoplasmic side of the membrane. Short sequence motifs (ITIM motif) lie at residues 354 to 359 (FTYLNS), 367 to 372 (PIYENV), 379 to 384 (EVYSLA), 410 to 415 (DIYSRL), and 423 to 428 (VDYEDA).

As to quaternary structure, interacts with ABL1. Interacts with GRB2 and SOS1. Interacts with SHIP-1/INPP5D. In terms of processing, phosphorylated on tyrosines upon activation. As to expression, primarily expressed in secondary lymphoid tissues by mature subsets of B-cells. Detected in spleen, lymph node, heart, skeletal muscle, kidney, liver and placenta. Specifically expressed by mature B lineage cells with higher expression in naive versus memory B-cells (at protein level).

The protein localises to the cell membrane. Its function is as follows. Type I transmembrane surface glycoprotein preferentially expressed by B-cells that regulates BCR-mediated signaling responses. Recruits ABL1 as the intracellular effector molecule to enhance B-cell activation. Also plays a negative role by suppressing ERK activation under homeostatic and BCR-stimulated conditions in a GRB2-dependent manner. The protein is Fc receptor-like protein 1 (FCRL1) of Homo sapiens (Human).